The following is a 349-amino-acid chain: NADH-quinone oxidoreductase subunit H (349 aa).

8 helical membrane passes run 11–31 (FPLL…LLLV), 83–103 (GVFL…WAVI), 116–136 (VGLL…IMGG), 162–182 (IGFV…TTIV), 200–220 (FLDW…ISAL), 252–272 (LFFL…TILF), 288–308 (VPGI…FAMV), and 323–343 (LGWK…AAFL).

This sequence belongs to the complex I subunit 1 family. As to quaternary structure, NDH-1 is composed of 14 different subunits. Subunits NuoA, H, J, K, L, M, N constitute the membrane sector of the complex.

Its subcellular location is the cell inner membrane. The enzyme catalyses a quinone + NADH + 5 H(+)(in) = a quinol + NAD(+) + 4 H(+)(out). In terms of biological role, NDH-1 shuttles electrons from NADH, via FMN and iron-sulfur (Fe-S) centers, to quinones in the respiratory chain. The immediate electron acceptor for the enzyme in this species is believed to be ubiquinone. Couples the redox reaction to proton translocation (for every two electrons transferred, four hydrogen ions are translocated across the cytoplasmic membrane), and thus conserves the redox energy in a proton gradient. This subunit may bind ubiquinone. The sequence is that of NADH-quinone oxidoreductase subunit H from Bartonella henselae (strain ATCC 49882 / DSM 28221 / CCUG 30454 / Houston 1) (Rochalimaea henselae).